The following is a 63-amino-acid chain: SERF-like protein C1705.02 (63 aa).

Residues 1 to 13 (MSRGNQRDVDRAR) show a composition bias toward basic and acidic residues. The tract at residues 1 to 63 (MSRGNQRDVD…EANGGSKGKK (63 aa)) is disordered. The span at 14 to 24 (NLKKSQASKKK) shows a compositional bias: basic residues. A compositionally biased stretch (basic and acidic residues) spans 25-35 (QAGDPTKRLEA).

Belongs to the SERF family.

It localises to the cytoplasm. The protein resides in the nucleus. It is found in the nucleolus. This Schizosaccharomyces pombe (strain 972 / ATCC 24843) (Fission yeast) protein is SERF-like protein C1705.02.